Here is a 432-residue protein sequence, read N- to C-terminus: Phosphoprotein associated with glycosphingolipid-enriched microdomains 1 (432 aa).

At 1-16 (MGPAGSLLGSGQMQIT) the chain is on the extracellular side. Residues 17–37 (LWGSLAAVAIFFVITFLIFLC) form a helical; Signal-anchor for type III membrane protein membrane-spanning segment. S-palmitoyl cysteine attachment occurs at residues Cys37 and Cys40. Topologically, residues 38–432 (SSCDREKKPR…LQQGRDITRL (395 aa)) are cytoplasmic. Phosphoserine is present on residues Ser50 and Ser61. Tyr105 carries the phosphotyrosine; by LYN modification. A compositionally biased stretch (polar residues) spans 110-122 (TSASDLLDSQDST). The interval 110–137 (TSASDLLDSQDSTGKPKCHQSRELPRIP) is disordered. Phosphotyrosine is present on residues Tyr163, Tyr181, and Tyr227. 2 disordered regions span residues 197–230 (EKGH…YASV) and 244–432 (SILG…ITRL). Basic and acidic residues predominate over residues 220-230 (GKAEFAEYASV). Ser229 bears the Phosphoserine mark. Polar residues predominate over residues 316–356 (MYSSVNKPGQLVNKSGQSLTVPESTYTSIQGDPQRSPSSCN). At Tyr317 the chain carries Phosphotyrosine; by FYN and LYN. An interaction with CSK region spans residues 317–320 (YSSV). Ser354 is modified (phosphoserine). The residue at position 359 (Tyr359) is a Phosphotyrosine. Ser380 carries the phosphoserine modification. 2 positions are modified to phosphotyrosine: Tyr387 and Tyr417. The tract at residues 430–432 (TRL) is interaction with NHERF1.

In terms of assembly, interacts with FYN. When phosphorylated, interacts with CSK. Interacts with NHERF1/EBP50. In resting T-cells, part of a PAG1-NHERF1-MSN complex which is disrupted upon TCR activation. Interacts with LYN on plasma membrane lipid rafts. Identified in a complex with LYN and STAT3. In terms of processing, palmitoylated. Post-translationally, phosphorylated by FYN on Tyr-317 in resting T-cells; which promotes interaction with CSK. Dephosphorylated by PTPRC/CD45 upon TCR activation; which leads to CSK dissociation. May also be dephosphorylated by PTPN11. Hyperphosphorylated in mast cells upon FCER1 activation. Phosphorylated by LYN. Ubiquitously expressed. Present in germinal center B-cells, plasma cells, T-cells, monocytes and platelets (at protein level).

Its subcellular location is the cell membrane. In terms of biological role, negatively regulates TCR (T-cell antigen receptor)-mediated signaling in T-cells and FCER1 (high affinity immunoglobulin epsilon receptor)-mediated signaling in mast cells. Promotes CSK activation and recruitment to lipid rafts, which results in LCK inhibition. Inhibits immunological synapse formation by preventing dynamic arrangement of lipid raft proteins. May be involved in cell adhesion signaling. This Homo sapiens (Human) protein is Phosphoprotein associated with glycosphingolipid-enriched microdomains 1 (PAG1).